A 517-amino-acid polypeptide reads, in one-letter code: AAA ATPase forming ring-shaped complexes (517 aa).

Residues 25 to 53 (ARNAKLVELLQASRTKLEEINGRLEALAE) are a coiled coil. Residue 233–238 (GNGKTL) coordinates ATP.

It belongs to the AAA ATPase family. In terms of assembly, homohexamer. Assembles into a hexameric ring structure.

In Corynebacterium jeikeium (strain K411), this protein is AAA ATPase forming ring-shaped complexes.